A 283-amino-acid chain; its full sequence is Bifunctional protein FolD (283 aa).

NADP(+) contacts are provided by residues 164–166 (GRS), Ser-189, and Ile-230.

This sequence belongs to the tetrahydrofolate dehydrogenase/cyclohydrolase family. In terms of assembly, homodimer.

It carries out the reaction (6R)-5,10-methylene-5,6,7,8-tetrahydrofolate + NADP(+) = (6R)-5,10-methenyltetrahydrofolate + NADPH. The catalysed reaction is (6R)-5,10-methenyltetrahydrofolate + H2O = (6R)-10-formyltetrahydrofolate + H(+). Its pathway is one-carbon metabolism; tetrahydrofolate interconversion. Its function is as follows. Catalyzes the oxidation of 5,10-methylenetetrahydrofolate to 5,10-methenyltetrahydrofolate and then the hydrolysis of 5,10-methenyltetrahydrofolate to 10-formyltetrahydrofolate. This Lactobacillus delbrueckii subsp. bulgaricus (strain ATCC 11842 / DSM 20081 / BCRC 10696 / JCM 1002 / NBRC 13953 / NCIMB 11778 / NCTC 12712 / WDCM 00102 / Lb 14) protein is Bifunctional protein FolD.